The following is an 876-amino-acid chain: Valine--tRNA ligase (876 aa).

A 'HIGH' region motif is present at residues proline 44 to histidine 54. Positions lysine 520–serine 524 match the 'KMSKS' region motif. Lysine 523 is an ATP binding site. Residues leucine 805 to alanine 876 adopt a coiled-coil conformation.

It belongs to the class-I aminoacyl-tRNA synthetase family. ValS type 1 subfamily. As to quaternary structure, monomer.

Its subcellular location is the cytoplasm. The catalysed reaction is tRNA(Val) + L-valine + ATP = L-valyl-tRNA(Val) + AMP + diphosphate. In terms of biological role, catalyzes the attachment of valine to tRNA(Val). As ValRS can inadvertently accommodate and process structurally similar amino acids such as threonine, to avoid such errors, it has a 'posttransfer' editing activity that hydrolyzes mischarged Thr-tRNA(Val) in a tRNA-dependent manner. The chain is Valine--tRNA ligase from Staphylococcus aureus (strain MRSA252).